A 201-amino-acid chain; its full sequence is Holliday junction branch migration complex subunit RuvA (201 aa).

The interval methionine 1 to alanine 63 is domain I. The interval aspartate 64 to glycine 142 is domain II. The tract at residues serine 143–arginine 153 is flexible linker. The tract at residues arginine 153 to arginine 201 is domain III.

Belongs to the RuvA family. As to quaternary structure, homotetramer. Forms an RuvA(8)-RuvB(12)-Holliday junction (HJ) complex. HJ DNA is sandwiched between 2 RuvA tetramers; dsDNA enters through RuvA and exits via RuvB. An RuvB hexamer assembles on each DNA strand where it exits the tetramer. Each RuvB hexamer is contacted by two RuvA subunits (via domain III) on 2 adjacent RuvB subunits; this complex drives branch migration. In the full resolvosome a probable DNA-RuvA(4)-RuvB(12)-RuvC(2) complex forms which resolves the HJ.

Its subcellular location is the cytoplasm. Functionally, the RuvA-RuvB-RuvC complex processes Holliday junction (HJ) DNA during genetic recombination and DNA repair, while the RuvA-RuvB complex plays an important role in the rescue of blocked DNA replication forks via replication fork reversal (RFR). RuvA specifically binds to HJ cruciform DNA, conferring on it an open structure. The RuvB hexamer acts as an ATP-dependent pump, pulling dsDNA into and through the RuvAB complex. HJ branch migration allows RuvC to scan DNA until it finds its consensus sequence, where it cleaves and resolves the cruciform DNA. This chain is Holliday junction branch migration complex subunit RuvA, found in Nocardia farcinica (strain IFM 10152).